The following is a 318-amino-acid chain: tRNA uridine(34) hydroxylase (318 aa).

The region spanning 123–217 (EDDDTVIIDA…YGKDPETKGQ (95 aa)) is the Rhodanese domain. Cys177 functions as the Cysteine persulfide intermediate in the catalytic mechanism.

This sequence belongs to the TrhO family.

The enzyme catalyses uridine(34) in tRNA + AH2 + O2 = 5-hydroxyuridine(34) in tRNA + A + H2O. Catalyzes oxygen-dependent 5-hydroxyuridine (ho5U) modification at position 34 in tRNAs. The protein is tRNA uridine(34) hydroxylase of Staphylococcus aureus (strain MRSA252).